Reading from the N-terminus, the 597-residue chain is uncharacterized protein (597 aa).

Residues M1–R23 are compositionally biased toward basic and acidic residues. 2 disordered regions span residues M1 to V32 and R171 to P192. Low complexity predominate over residues E175–P186. Phosphoserine is present on residues S237 and S241. Disordered stretches follow at residues S302 to D335 and E549 to K569. A compositionally biased stretch (polar residues) spans A557 to S568.

This is an uncharacterized protein from Rattus norvegicus (Rat).